A 213-amino-acid polypeptide reads, in one-letter code: uncharacterized protein (213 aa).

S-adenosyl-L-methionine contacts are provided by G53, E74, and D97.

The protein belongs to the methyltransferase superfamily. YrrT family.

In terms of biological role, could be a S-adenosyl-L-methionine-dependent methyltransferase. This is an uncharacterized protein from Geobacillus sp. (strain WCH70).